The sequence spans 261 residues: Putative outer membrane protein CT_371 (261 aa).

The signal sequence occupies residues 1–18; it reads MRLCFILFLLLSPLISEA.

The protein localises to the cell outer membrane. The sequence is that of Putative outer membrane protein CT_371 from Chlamydia trachomatis serovar D (strain ATCC VR-885 / DSM 19411 / UW-3/Cx).